The following is an 80-amino-acid chain: Exodeoxyribonuclease 7 small subunit (80 aa).

The protein belongs to the XseB family. In terms of assembly, heterooligomer composed of large and small subunits.

The protein localises to the cytoplasm. The catalysed reaction is Exonucleolytic cleavage in either 5'- to 3'- or 3'- to 5'-direction to yield nucleoside 5'-phosphates.. In terms of biological role, bidirectionally degrades single-stranded DNA into large acid-insoluble oligonucleotides, which are then degraded further into small acid-soluble oligonucleotides. The polypeptide is Exodeoxyribonuclease 7 small subunit (Rickettsia akari (strain Hartford)).